The primary structure comprises 197 residues: Phosphoheptose isomerase (197 aa).

In terms of domain architecture, SIS spans 36–197 (MVNALLNEGK…IDSQLFGSEE (162 aa)). 51–53 (NGG) is a binding site for substrate. Positions 60 and 64 each coordinate Zn(2+). Residues Glu64, 93–94 (ND), 119–121 (STS), Ser124, and Gln174 each bind substrate. Positions 174 and 182 each coordinate Zn(2+).

This sequence belongs to the SIS family. GmhA subfamily. In terms of assembly, homotetramer. Requires Zn(2+) as cofactor.

It is found in the cytoplasm. It carries out the reaction 2 D-sedoheptulose 7-phosphate = D-glycero-alpha-D-manno-heptose 7-phosphate + D-glycero-beta-D-manno-heptose 7-phosphate. Its pathway is carbohydrate biosynthesis; D-glycero-D-manno-heptose 7-phosphate biosynthesis; D-glycero-alpha-D-manno-heptose 7-phosphate and D-glycero-beta-D-manno-heptose 7-phosphate from sedoheptulose 7-phosphate: step 1/1. In terms of biological role, catalyzes the isomerization of sedoheptulose 7-phosphate in D-glycero-D-manno-heptose 7-phosphate. This chain is Phosphoheptose isomerase, found in Pseudomonas syringae pv. syringae (strain B728a).